The chain runs to 573 residues: Vacuolar protein 8 (573 aa).

Residues 1–36 (MAASAADRMGRQRMSGLSCSAPPRPTVVTNPGNKQD) form a disordered region. Polar residues predominate over residues 27–36 (VVTNPGNKQD). ARM repeat units follow at residues 60–97 (NRGE…FAEI), 98–137 (TEKD…NLAV), 139–178 (NENK…NLAT), 180–219 (EANK…NMTH), 221–260 (DQNR…NIAV), 264–303 (NRKK…NLAS), 305–344 (SDYQ…NISI), 346–386 (PLNE…NLAA), and 430–469 (DELK…NLSS).

This sequence belongs to the beta-catenin family.

Its subcellular location is the vacuole membrane. Its function is as follows. Functions in both vacuole inheritance and protein targeting from the cytoplasm to vacuole. The chain is Vacuolar protein 8 (VAC8) from Yarrowia lipolytica (strain CLIB 122 / E 150) (Yeast).